Reading from the N-terminus, the 318-residue chain is O-glucosyltransferase LpsA (318 aa).

This sequence belongs to the glycosyltransferase 90 family.

Its pathway is protein modification; protein glycosylation. In terms of biological role, involved in lipopolysaccharide core biosynthesis. This Dichelobacter nodosus (Bacteroides nodosus) protein is O-glucosyltransferase LpsA (lpsA).